A 160-amino-acid chain; its full sequence is Small ribosomal subunit protein uS9 (160 aa).

The span at 1 to 18 (MTDTSNSLQDLGTLTGAP) shows a compositional bias: polar residues. Residues 1–37 (MTDTSNSLQDLGTLTGAPSAQPVKSVEPKIDAQGRAY) form a disordered region.

It belongs to the universal ribosomal protein uS9 family.

The polypeptide is Small ribosomal subunit protein uS9 (Hyphomonas neptunium (strain ATCC 15444)).